Consider the following 757-residue polypeptide: Amine oxidase [copper-containing] 2 (757 aa).

The Cytoplasmic portion of the chain corresponds to 1 to 4 (MNLK). The chain crosses the membrane as a helical span at residues 5 to 25 (VLLLLLGLSFLTVFALVYVLL). Residues 26–757 (TRQGSFSQSP…NLPSFSYEGL (732 aa)) lie on the Extracellular side of the membrane. N-linked (GlcNAc...) asparagine glycans are attached at residues asparagine 133, asparagine 198, and asparagine 226. Aspartate 381 serves as the catalytic Proton acceptor. A disulfide bridge links cysteine 399 with cysteine 425. The active-site Schiff-base intermediate with substrate; via topaquinone is tyrosine 466. Tyrosine 466 is subject to 2',4',5'-topaquinone. Positions 517 and 519 each coordinate Cu(2+). Positions 526, 527, 528, 569, 638, 660, and 662 each coordinate Ca(2+). A glycan (N-linked (GlcNAc...) asparagine) is linked at asparagine 663. Glutamate 664, aspartate 670, and leucine 671 together coordinate Ca(2+). Position 681 (histidine 681) interacts with Cu(2+). The cysteines at positions 731 and 738 are disulfide-linked.

This sequence belongs to the copper/topaquinone oxidase family. As to quaternary structure, homodimer; disulfide-linked. Probably forms heterodimers with AOC3. It depends on Cu(2+) as a cofactor. Ca(2+) serves as cofactor. The cofactor is L-topaquinone. In terms of processing, topaquinone (TPQ) is generated by copper-dependent autoxidation of a specific tyrosyl residue. Significantly much highly expressed in retina.

The protein localises to the cell membrane. It carries out the reaction 2-phenylethylamine + O2 + H2O = 2-phenylacetaldehyde + H2O2 + NH4(+). It catalyses the reaction tryptamine + O2 + H2O = indole-3-acetaldehyde + H2O2 + NH4(+). The catalysed reaction is tyramine + O2 + H2O = (4-hydroxyphenyl)acetaldehyde + H2O2 + NH4(+). Catalyzes the oxidative deamination of primary amines to the corresponding aldehydes with the concomitant production of hydrogen peroxide and ammonia. Has a preference for 2-phenylethylamine, tryptamine and tyramine. Could also act on methylamine and benzylamine but much less efficiently. In Mus musculus (Mouse), this protein is Amine oxidase [copper-containing] 2.